The sequence spans 424 residues: Serine--tRNA ligase (424 aa).

232–234 contacts L-serine; the sequence is TAE. 263 to 265 is an ATP binding site; it reads RSE. Residue glutamate 286 participates in L-serine binding. Residue 350–353 coordinates ATP; the sequence is EISS. Residue serine 385 participates in L-serine binding.

This sequence belongs to the class-II aminoacyl-tRNA synthetase family. Type-1 seryl-tRNA synthetase subfamily. In terms of assembly, homodimer. The tRNA molecule binds across the dimer.

The protein resides in the cytoplasm. It catalyses the reaction tRNA(Ser) + L-serine + ATP = L-seryl-tRNA(Ser) + AMP + diphosphate + H(+). The enzyme catalyses tRNA(Sec) + L-serine + ATP = L-seryl-tRNA(Sec) + AMP + diphosphate + H(+). It functions in the pathway aminoacyl-tRNA biosynthesis; selenocysteinyl-tRNA(Sec) biosynthesis; L-seryl-tRNA(Sec) from L-serine and tRNA(Sec): step 1/1. In terms of biological role, catalyzes the attachment of serine to tRNA(Ser). Is also able to aminoacylate tRNA(Sec) with serine, to form the misacylated tRNA L-seryl-tRNA(Sec), which will be further converted into selenocysteinyl-tRNA(Sec). The polypeptide is Serine--tRNA ligase (Latilactobacillus sakei subsp. sakei (strain 23K) (Lactobacillus sakei subsp. sakei)).